The chain runs to 206 residues: Large ribosomal subunit protein uL4 (206 aa).

The tract at residues 47–94 is disordered; sequence NRAQKDRSEINKSTKKPFRQKGTGRARAGRASSPLWRGGGKVFPNSPD. Basic and acidic residues predominate over residues 49 to 58; that stretch reads AQKDRSEINK. The segment covering 59–74 has biased composition (basic residues); sequence STKKPFRQKGTGRARA.

The protein belongs to the universal ribosomal protein uL4 family. In terms of assembly, part of the 50S ribosomal subunit.

Functionally, one of the primary rRNA binding proteins, this protein initially binds near the 5'-end of the 23S rRNA. It is important during the early stages of 50S assembly. It makes multiple contacts with different domains of the 23S rRNA in the assembled 50S subunit and ribosome. In terms of biological role, forms part of the polypeptide exit tunnel. The polypeptide is Large ribosomal subunit protein uL4 (Laribacter hongkongensis (strain HLHK9)).